The following is a 189-amino-acid chain: NADH-quinone oxidoreductase subunit B (189 aa).

The [4Fe-4S] cluster site is built by C39, C40, C104, and C135.

This sequence belongs to the complex I 20 kDa subunit family. As to quaternary structure, NDH-1 is composed of 14 different subunits. Subunits NuoB, C, D, E, F, and G constitute the peripheral sector of the complex. Requires [4Fe-4S] cluster as cofactor.

The protein resides in the cell inner membrane. It catalyses the reaction a quinone + NADH + 5 H(+)(in) = a quinol + NAD(+) + 4 H(+)(out). Functionally, NDH-1 shuttles electrons from NADH, via FMN and iron-sulfur (Fe-S) centers, to quinones in the respiratory chain. The immediate electron acceptor for the enzyme in this species is believed to be a menaquinone. Couples the redox reaction to proton translocation (for every two electrons transferred, four hydrogen ions are translocated across the cytoplasmic membrane), and thus conserves the redox energy in a proton gradient. This Chlorobaculum parvum (strain DSM 263 / NCIMB 8327) (Chlorobium vibrioforme subsp. thiosulfatophilum) protein is NADH-quinone oxidoreductase subunit B.